A 310-amino-acid chain; its full sequence is Ribosomal RNA small subunit methyltransferase H (310 aa).

Residues 33–35 (AGH), Asp-53, Phe-79, Asp-100, and Gln-107 contribute to the S-adenosyl-L-methionine site.

This sequence belongs to the methyltransferase superfamily. RsmH family.

It is found in the cytoplasm. It catalyses the reaction cytidine(1402) in 16S rRNA + S-adenosyl-L-methionine = N(4)-methylcytidine(1402) in 16S rRNA + S-adenosyl-L-homocysteine + H(+). Specifically methylates the N4 position of cytidine in position 1402 (C1402) of 16S rRNA. This chain is Ribosomal RNA small subunit methyltransferase H, found in Clostridium beijerinckii (strain ATCC 51743 / NCIMB 8052) (Clostridium acetobutylicum).